The primary structure comprises 660 residues: Probable Xaa-Pro aminopeptidase PTRG_10574 (660 aa).

Mn(2+) contacts are provided by Asp-274, Asp-285, Glu-435, and Glu-476. The segment at Ser-641–Asn-660 is disordered.

It belongs to the peptidase M24B family. Mn(2+) is required as a cofactor.

It carries out the reaction Release of any N-terminal amino acid, including proline, that is linked to proline, even from a dipeptide or tripeptide.. Functionally, catalyzes the removal of a penultimate prolyl residue from the N-termini of peptides. This is Probable Xaa-Pro aminopeptidase PTRG_10574 from Pyrenophora tritici-repentis (strain Pt-1C-BFP) (Wheat tan spot fungus).